Consider the following 320-residue polypeptide: Eukaryotic translation initiation factor 3 subunit G (320 aa).

The segment at 1 to 59 (MPTGDFDSKPSWADQVEEEGEDDKCVTSELLKGIPLATGDTSPEPELLPGAPLPPPKEV) is disordered. Phosphoserine occurs at positions 8 and 11. Residues threonine 38 and threonine 41 each carry the phosphothreonine modification. Residues serine 42, serine 189, serine 223, and serine 264 each carry the phosphoserine modification. A disordered region spans residues 209–234 (KTGKYVPPSLRDGASRRGESMQPNRR). The segment covering 221-234 (GASRRGESMQPNRR) has biased composition (basic and acidic residues). The RRM domain maps to 239-317 (ATIRVTNLSE…LILNVEWAKP (79 aa)).

In terms of assembly, component of the eukaryotic translation initiation factor 3 (eIF-3) complex, which is composed of 13 subunits: EIF3A, EIF3B, EIF3C, EIF3D, EIF3E, EIF3F, EIF3G, EIF3H, EIF3I, EIF3J, EIF3K, EIF3L and EIF3M. The eIF-3 complex appears to include 3 stable modules: module A is composed of EIF3A, EIF3B, EIF3G and EIF3I; module B is composed of EIF3F, EIF3H, and EIF3M; and module C is composed of EIF3C, EIF3D, EIF3E, EIF3K and EIF3L. EIF3C of module C binds EIF3B of module A and EIF3H of module B, thereby linking the three modules. EIF3J is a labile subunit that binds to the eIF-3 complex via EIF3B. The eIF-3 complex interacts with RPS6KB1 under conditions of nutrient depletion. Mitogenic stimulation leads to binding and activation of a complex composed of MTOR and RPTOR, leading to phosphorylation and release of RPS6KB1 and binding of EIF4B to eIF-3. Interacts (via C-terminus) with AIFM1 (via N-terminus). Interacts with DHX33; the interaction is independent of RNA. In terms of processing, phosphorylated. Phosphorylation is enhanced upon serum stimulation.

It is found in the cytoplasm. The protein resides in the nucleus. The protein localises to the perinuclear region. In terms of biological role, RNA-binding component of the eukaryotic translation initiation factor 3 (eIF-3) complex, which is required for several steps in the initiation of protein synthesis. The eIF-3 complex associates with the 40S ribosome and facilitates the recruitment of eIF-1, eIF-1A, eIF-2:GTP:methionyl-tRNAi and eIF-5 to form the 43S pre-initiation complex (43S PIC). The eIF-3 complex stimulates mRNA recruitment to the 43S PIC and scanning of the mRNA for AUG recognition. The eIF-3 complex is also required for disassembly and recycling of post-termination ribosomal complexes and subsequently prevents premature joining of the 40S and 60S ribosomal subunits prior to initiation. The eIF-3 complex specifically targets and initiates translation of a subset of mRNAs involved in cell proliferation, including cell cycling, differentiation and apoptosis, and uses different modes of RNA stem-loop binding to exert either translational activation or repression. This subunit can bind 18S rRNA. (Microbial infection) In case of FCV infection, plays a role in the ribosomal termination-reinitiation event leading to the translation of VP2. The polypeptide is Eukaryotic translation initiation factor 3 subunit G (Homo sapiens (Human)).